A 185-amino-acid chain; its full sequence is Acireductone dioxygenase (185 aa).

Residues histidine 97, histidine 99, glutamate 103, and histidine 141 each contribute to the Fe(2+) site. Ni(2+) is bound by residues histidine 97, histidine 99, glutamate 103, and histidine 141.

This sequence belongs to the acireductone dioxygenase (ARD) family. Monomer. Fe(2+) serves as cofactor. Ni(2+) is required as a cofactor.

The catalysed reaction is 1,2-dihydroxy-5-(methylsulfanyl)pent-1-en-3-one + O2 = 3-(methylsulfanyl)propanoate + CO + formate + 2 H(+). It carries out the reaction 1,2-dihydroxy-5-(methylsulfanyl)pent-1-en-3-one + O2 = 4-methylsulfanyl-2-oxobutanoate + formate + 2 H(+). It functions in the pathway amino-acid biosynthesis; L-methionine biosynthesis via salvage pathway; L-methionine from S-methyl-5-thio-alpha-D-ribose 1-phosphate: step 5/6. Its function is as follows. Catalyzes 2 different reactions between oxygen and the acireductone 1,2-dihydroxy-3-keto-5-methylthiopentene (DHK-MTPene) depending upon the metal bound in the active site. Fe-containing acireductone dioxygenase (Fe-ARD) produces formate and 2-keto-4-methylthiobutyrate (KMTB), the alpha-ketoacid precursor of methionine in the methionine recycle pathway. Ni-containing acireductone dioxygenase (Ni-ARD) produces methylthiopropionate, carbon monoxide and formate, and does not lie on the methionine recycle pathway. The protein is Acireductone dioxygenase of Stenotrophomonas maltophilia (strain R551-3).